We begin with the raw amino-acid sequence, 381 residues long: MFKWAQAALANVAGTKEPIYGPEAIRSVAEEAKTTPYTETTKDDLKWQAMESTCVETQCFYFMTDSGQLAFAQVIYSNVAGIRTTCQFNCKVFSLDGSKPHLWCSTPLNNHEFSEDKTSFYATDCAVELSEDGNSYTIKSLNDERSIVNVTIKRTAPGFKIGTSGTTLFGTDLANPWGSMRHVFWPRCVAEGTIATPDGPVDCKGRAMFVHALQGMKPHHAAAKWNFCNFQGPNYSAVLMQYTTPPSYGSTVVNVGGIVKDNEIIFAGAEGAVTHVAIKGDTENDWPEPTAIKFEWKGTTKDGKQADAVLEGELEDKLDRIDVMAEVPGFVKQIVAGAVGTKPYIYQYAPQKKKLTLKLKLGEEEISEEGYLFSEATFISA.

The tract at residues methionine 1 to proline 18 is peripherally associates with membranes.

It belongs to the SVF1 family.

It is found in the golgi apparatus. It localises to the cis-Golgi network membrane. Its subcellular location is the endoplasmic reticulum membrane. The protein resides in the cytoplasm. The protein localises to the nucleus. Ceramide-binding protein that may transfer ceramides from the endoplasmic reticulum membrane to the cis-Golgi network membrane, and is thereby required for the biosynthesis of complex sphingolipids. This is Ceramide-binding protein svf-1 (svf-1) from Neurospora crassa (strain ATCC 24698 / 74-OR23-1A / CBS 708.71 / DSM 1257 / FGSC 987).